The primary structure comprises 104 residues: Probable monothiol glutaredoxin 2 (104 aa).

The region spanning 7-104 (FEFIENEIKN…NGELEKMLKG (98 aa)) is the Glutaredoxin domain. Residue Lys24 participates in glutathione binding. Cys32 is a binding site for [2Fe-2S] cluster. Glutathione contacts are provided by residues Arg61, Phe73, and 86-87 (CD).

It belongs to the glutaredoxin family. Monothiol subfamily.

This is Probable monothiol glutaredoxin 2 (grxC2) from Rickettsia felis (strain ATCC VR-1525 / URRWXCal2) (Rickettsia azadi).